The sequence spans 232 residues: Large ribosomal subunit protein uL1 (232 aa).

The protein belongs to the universal ribosomal protein uL1 family. In terms of assembly, part of the 50S ribosomal subunit.

In terms of biological role, binds directly to 23S rRNA. The L1 stalk is quite mobile in the ribosome, and is involved in E site tRNA release. Its function is as follows. Protein L1 is also a translational repressor protein, it controls the translation of the L11 operon by binding to its mRNA. The chain is Large ribosomal subunit protein uL1 from Xanthobacter autotrophicus (strain ATCC BAA-1158 / Py2).